The sequence spans 282 residues: Dof zinc finger protein 4 (282 aa).

Residues 45-99 (VKCPRCESTNTKFCYYNNYNLSQPRHFCKSCRRYWTKGGVLRNVPVGGGCRKTKR) form a Dof-type zinc finger. Residues cysteine 47, cysteine 50, cysteine 72, and cysteine 75 each contribute to the Zn(2+) site. The segment at 89 to 161 (PVGGGCRKTK…TTPATPSSNT (73 aa)) is disordered. 2 stretches are compositionally biased toward low complexity: residues 102–117 (SSSA…TAAT) and 125–161 (RASA…SSNT).

The protein resides in the nucleus. Transcription factor that may transactivate seed storage protein genes in developing seeds. The polypeptide is Dof zinc finger protein 4 (Oryza sativa subsp. japonica (Rice)).